The sequence spans 184 residues: Large ribosomal subunit protein uL22 (184 aa).

This sequence belongs to the universal ribosomal protein uL22 family. As to quaternary structure, part of the 50S ribosomal subunit.

Its function is as follows. This protein binds specifically to 23S rRNA. It makes multiple contacts with different domains of the 23S rRNA in the assembled 50S subunit and ribosome. The globular domain of the protein is located near the polypeptide exit tunnel on the outside of the subunit, while an extended beta-hairpin is found that lines the wall of the exit tunnel in the center of the 70S ribosome. The chain is Large ribosomal subunit protein uL22 from Pyrobaculum calidifontis (strain DSM 21063 / JCM 11548 / VA1).